A 316-amino-acid polypeptide reads, in one-letter code: MIYTGIEYIFVNISFVMFFFVTLLNLINLFYKIDKIDHFSKNSMTIAFFCTTGFLITRYLQTRHLPLGNLYESLMFLSWGFSLLYLILEVRDQIGLSHAVLAPGAMLIHAFATLSLPQQMRSPTLLVPALQSQWLMMHVSAMLISYITLLCGSLLAITLLSLFYGKVGSVTLEHKFEKQSFFFLMNPRKNLWKQTGAENYSYFLISNSRKCQLINCLDKWACQTISLGFSLLTIGILSGAVWANEAWGSYWSWDPKETWALVTWLVYAIYLHTKVDKRKMGEGPAMTASMGFFLVWICFLGVNLLGVGLHNYGWLA.

Transmembrane regions (helical) follow at residues 9 to 29 (IFVN…LINL), 39 to 61 (FSKN…RYLQ), 70 to 90 (LYES…ILEV), 94 to 114 (IGLS…FATL), 143 to 163 (LISY…LSLF), 224 to 244 (TISL…VWAN), 257 to 271 (ETWA…AIYL), and 289 to 309 (SMGF…GVGL).

It belongs to the CcmF/CycK/Ccl1/NrfE/CcsA family. As to quaternary structure, may interact with Ccs1.

It localises to the plastid. Its subcellular location is the chloroplast thylakoid membrane. Functionally, required during biogenesis of c-type cytochromes (cytochrome c6 and cytochrome f) at the step of heme attachment. The protein is Cytochrome c biogenesis protein CcsA of Adiantum capillus-veneris (Maidenhair fern).